We begin with the raw amino-acid sequence, 522 residues long: Zinc finger protein C25B8.19c (522 aa).

Disordered regions lie at residues 1-25, 61-96, 235-265, 311-386, and 413-462; these read MSSDNTPSINRRNNENPPQSSLPTT, DPQAATVSESANVSRPTPAPVPPAGNTNTPTTSNSN, QRQSSEAAEQPSSKNNTSGANPPSSNNQEVT, QPSS…HTLS, and NSAQ…STSS. Over residues 84–96 the composition is skewed to low complexity; sequence AGNTNTPTTSNSN. 2 stretches are compositionally biased toward polar residues: residues 311-321 and 335-344; these read QPSSRDLQNHP and ASNTLNHANG. The segment covering 345 to 362 has biased composition (low complexity); sequence NQAENASESSTSQSNDSQ. The segment covering 413-427 has biased composition (polar residues); sequence NSAQAHPMGQQSDSN. Basic and acidic residues predominate over residues 428 to 438; the sequence is YSDHHNNDKRA. Low complexity predominate over residues 453–462; sequence SHTGSSSTSS. 2 C2H2-type zinc fingers span residues 468 to 495 and 496 to 522; these read YRCTECLQGFSRPSSLKIHTYSHTGERP and FVCDYAGCGKAFNVRSNMRRHQRIHGL.

It is found in the nucleus. This Schizosaccharomyces pombe (strain 972 / ATCC 24843) (Fission yeast) protein is Zinc finger protein C25B8.19c.